We begin with the raw amino-acid sequence, 889 residues long: Chromatin structure-remodeling complex subunit RSC2 (889 aa).

A Bromo 1 domain is found at 12 to 120; the sequence is QNSSALYKDL…KYLKDTIYPN (109 aa). Positions 151–268 are disordered; it reads EKAEEVARAN…QVSRTQVKRG (118 aa). Over residues 158–174 the composition is skewed to low complexity; sequence RANAARAESSSSMNSTE. Over residues 197–209 the composition is skewed to acidic residues; the sequence is NNDEDYEATDMDI. Residues 210-222 show a composition bias toward basic and acidic residues; that stretch reads DNPKDADFPDLIR. Polar residues predominate over residues 241–250; the sequence is STTPSHSGTP. Positions 255-268 are enriched in basic residues; sequence PRHRQVSRTQVKRG. The Bromo 2 domain maps to 280–382; that stretch reads RMKNVMKVLK…KTFTSLARFE (103 aa). Positions 408-526 constitute a BAH domain; that stretch reads ISYHVGDWAL…ESDKIFNKIR (119 aa). The interval 601 to 624 is disordered; sequence GEYATSDDCPRYIIRPNDSPEEGQ. Residue Tyr612 is modified to Phosphotyrosine. Ser682 carries the post-translational modification Phosphoserine. Residues 831-865 form a disordered region; it reads EVEETMEDVTGKDKDDDGLEPDVENEKESLPGPFV.

It belongs to the RSC1 family. In terms of assembly, component of the two forms of the RSC complex composed of at least either RSC1 or RSC2, and ARP7, ARP9, LDB7, NPL6, RSC3, RSC30, RSC4, RSC58, RSC6, RSC8, RSC9, SFH1, STH1, HTL1 and probably RTT102. The complexes interact with histone and histone variant components of centromeric chromatin.

It localises to the nucleus. Component of the chromatin structure remodeling complex (RSC), which is involved in transcription regulation and nucleosome positioning. RSC is responsible for the transfer of a histone octamer from a nucleosome core particle to naked DNA. The reaction requires ATP and involves an activated RSC-nucleosome intermediate. Remodeling reaction also involves DNA translocation, DNA twist and conformational change. As a reconfigurer of centromeric and flanking nucleosomes, RSC complex is required both for proper kinetochore function in chromosome segregation and, via a PKC1-dependent signaling pathway, for organization of the cellular cytoskeleton. This subunit is involved in meiotic sporulation through regulating IME2 expression, and is also essential for 2-micron plasmid maintenance and for normal REP1 protein localization. The polypeptide is Chromatin structure-remodeling complex subunit RSC2 (RSC2) (Saccharomyces cerevisiae (strain ATCC 204508 / S288c) (Baker's yeast)).